Here is a 96-residue protein sequence, read N- to C-terminus: Co-chaperonin GroES (96 aa).

The protein belongs to the GroES chaperonin family. Heptamer of 7 subunits arranged in a ring. Interacts with the chaperonin GroEL.

The protein resides in the cytoplasm. Functionally, together with the chaperonin GroEL, plays an essential role in assisting protein folding. The GroEL-GroES system forms a nano-cage that allows encapsulation of the non-native substrate proteins and provides a physical environment optimized to promote and accelerate protein folding. GroES binds to the apical surface of the GroEL ring, thereby capping the opening of the GroEL channel. The protein is Co-chaperonin GroES of Holospora obtusa.